A 72-amino-acid chain; its full sequence is Large ribosomal subunit protein bL32 (72 aa).

This sequence belongs to the bacterial ribosomal protein bL32 family.

This is Large ribosomal subunit protein bL32 from Dehalococcoides mccartyi (strain ATCC BAA-2100 / JCM 16839 / KCTC 5957 / BAV1).